The primary structure comprises 267 residues: Tryptophan synthase alpha chain (267 aa).

Residues Glu-51 and Asp-62 each act as proton acceptor in the active site.

It belongs to the TrpA family. As to quaternary structure, tetramer of two alpha and two beta chains.

It carries out the reaction (1S,2R)-1-C-(indol-3-yl)glycerol 3-phosphate + L-serine = D-glyceraldehyde 3-phosphate + L-tryptophan + H2O. The protein operates within amino-acid biosynthesis; L-tryptophan biosynthesis; L-tryptophan from chorismate: step 5/5. Its function is as follows. The alpha subunit is responsible for the aldol cleavage of indoleglycerol phosphate to indole and glyceraldehyde 3-phosphate. This is Tryptophan synthase alpha chain from Prochlorococcus marinus (strain SARG / CCMP1375 / SS120).